The primary structure comprises 95 residues: Aspartyl/glutamyl-tRNA(Asn/Gln) amidotransferase subunit C (95 aa).

It belongs to the GatC family. In terms of assembly, heterotrimer of A, B and C subunits.

The enzyme catalyses L-glutamyl-tRNA(Gln) + L-glutamine + ATP + H2O = L-glutaminyl-tRNA(Gln) + L-glutamate + ADP + phosphate + H(+). It catalyses the reaction L-aspartyl-tRNA(Asn) + L-glutamine + ATP + H2O = L-asparaginyl-tRNA(Asn) + L-glutamate + ADP + phosphate + 2 H(+). Allows the formation of correctly charged Asn-tRNA(Asn) or Gln-tRNA(Gln) through the transamidation of misacylated Asp-tRNA(Asn) or Glu-tRNA(Gln) in organisms which lack either or both of asparaginyl-tRNA or glutaminyl-tRNA synthetases. The reaction takes place in the presence of glutamine and ATP through an activated phospho-Asp-tRNA(Asn) or phospho-Glu-tRNA(Gln). This chain is Aspartyl/glutamyl-tRNA(Asn/Gln) amidotransferase subunit C, found in Geobacter sp. (strain M21).